A 137-amino-acid chain; its full sequence is MDVFMKGLSMAKEGVVAAAEKTKQGVTEAAEKTKEGVLYVGSKTKEGVVQGVASVAEKTKEQASHLGGAVFSGAGNIAAATGLVKKEEFPTDLKPEEVAQEAAEEPLIEPLMEPEGESYEDSPQEEYQEYEPEAKGP.

2 tandem repeats follow at residues 20–30 (EKTKQGVTEAA) and 31–41 (EKTKEGVLYVG). Residues 20–67 (EKTKQGVTEAAEKTKEGVLYVGSKTKEGVVQGVASVAEKTKEQASHLG) form a 4 X 11 AA tandem repeats of [EGS]-K-T-K-[EQ]-[GQ]-V-X(4) region. The 3; approximate repeat unit spans residues 42–56 (SKTKEGVVQGVASVA). Repeat 4 spans residues 57-67 (EKTKEQASHLG). The span at 88–97 (EFPTDLKPEE) shows a compositional bias: basic and acidic residues. Residues 88–137 (EFPTDLKPEEVAQEAAEEPLIEPLMEPEGESYEDSPQEEYQEYEPEAKGP) are disordered. Residues 98 to 131 (VAQEAAEEPLIEPLMEPEGESYEDSPQEEYQEYE) show a composition bias toward acidic residues. Phosphoserine; by BARK1, CK2 and GRK5 is present on Ser118.

This sequence belongs to the synuclein family. Post-translationally, phosphorylated. Phosphorylation by G-protein coupled receptor kinases (GRK) is more efficient than phosphorylation by CK1, CK2 and CaM-kinase II. In terms of tissue distribution, expressed specifically in brain.

The protein resides in the cytoplasm. Its function is as follows. May be involved in neuronal plasticity. This chain is Beta-synuclein (Sncb), found in Rattus norvegicus (Rat).